A 588-amino-acid chain; its full sequence is Snake venom 5'-nucleotidase (588 aa).

The signal sequence occupies residues 1–40 (MQTPKRRRGAQGCPRSSPSPPLLLLVGAVWFCAALSVAAG). Residues D51 and H53 each contribute to the Zn(2+) site. A disulfide bond links C66 and C71. Residue N88 is glycosylated (N-linked (GlcNAc...) asparagine). 2 residues coordinate Zn(2+): D99 and N131. N167 is a glycosylation site (N-linked (GlcNAc...) asparagine). H234 and H257 together coordinate Zn(2+). N327, N347, and N361 each carry an N-linked (GlcNAc...) asparagine glycan. Disulfide bonds link C367-C372 and C379-C401. Residue R368 participates in AMP binding. AMP is bound by residues N404 and R409. The N-linked (GlcNAc...) asparagine glycan is linked to N418. AMP is bound at residue F432. A disulfide bridge connects residues C491 and C494. AMP is bound by residues F515 and D521. N532 carries N-linked (GlcNAc...) asparagine glycosylation. A lipid anchor (GPI-anchor amidated serine) is attached at S564. Positions 565-588 (AGTLFQAQLFLTWGLCISLLYFIL) are cleaved as a propeptide — removed in mature form.

The protein belongs to the 5'-nucleotidase family. It depends on Zn(2+) as a cofactor. In terms of processing, venom 5'-nucleotidases (or a part thereof) may be released into the venom via exosome-like vesicles. They may be attached via a GPI anchor to the membrane of these vesicles. Soluble forms of 5'-nucleotidase might be released by cleavage of the ectodomain in the exosome-like vesicles or venom gland cells. In terms of tissue distribution, expressed by the venom gland.

The protein localises to the membrane. It catalyses the reaction a ribonucleoside 5'-phosphate + H2O = a ribonucleoside + phosphate. Hydrolyzes nucleotides into nucleosides. Snake venom 5'-nucleotidases are widely distributed among venomous snake taxa, but there is a lack of information about their biological activities. They have been shown to inhibit platelet aggregation. This effect may be due to the liberation of inhibitory AMP or adenosine by its action on ADP released upon initiation of aggregation. Venom 5'-nucleotidases are also known to synergistically act in vivo with other toxins like ADPases, phospholipases, and disintegrins to exert a more pronounced anti-coagulant effect. This Gloydius brevicauda (Korean slamosa snake) protein is Snake venom 5'-nucleotidase.